Reading from the N-terminus, the 297-residue chain is Haloalkane dehalogenase (297 aa).

Positions 47–148 (PPIVLLHGEP…AIARLVVANG (102 aa)) constitute an AB hydrolase-1 domain. Catalysis depends on D123, which acts as the Nucleophile. The active-site Proton donor is D250. H279 acts as the Proton acceptor in catalysis.

Belongs to the haloalkane dehalogenase family. Type 1 subfamily. Monomer.

It catalyses the reaction 1-haloalkane + H2O = a halide anion + a primary alcohol + H(+). In terms of biological role, catalyzes hydrolytic cleavage of carbon-halogen bonds in halogenated aliphatic compounds, leading to the formation of the corresponding primary alcohols, halide ions and protons. The chain is Haloalkane dehalogenase from Mycobacterium marinum (strain ATCC BAA-535 / M).